Consider the following 406-residue polypeptide: Tryptophan 2,3-dioxygenase A (406 aa).

Substrate contacts are provided by residues 71-75 (FIVTH) and Arg-143. Heme is bound at residue His-327. Thr-341 contacts substrate.

This sequence belongs to the tryptophan 2,3-dioxygenase family. In terms of assembly, homotetramer. Dimer of dimers. Requires heme as cofactor.

The enzyme catalyses L-tryptophan + O2 = N-formyl-L-kynurenine. It functions in the pathway amino-acid degradation; L-tryptophan degradation via kynurenine pathway; L-kynurenine from L-tryptophan: step 1/2. Functionally, heme-dependent dioxygenase that catalyzes the oxidative cleavage of the L-tryptophan (L-Trp) pyrrole ring and converts L-tryptophan to N-formyl-L-kynurenine. Catalyzes the oxidative cleavage of the indole moiety. In Danio rerio (Zebrafish), this protein is Tryptophan 2,3-dioxygenase A.